The chain runs to 310 residues: Putative S-adenosyl-L-methionine-dependent methyltransferase ML2640 (310 aa).

Residues Asp132 and 161–162 contribute to the S-adenosyl-L-methionine site; that span reads DL.

Belongs to the UPF0677 family.

Functionally, exhibits S-adenosyl-L-methionine-dependent methyltransferase activity. This chain is Putative S-adenosyl-L-methionine-dependent methyltransferase ML2640, found in Mycobacterium leprae (strain TN).